Reading from the N-terminus, the 211-residue chain is ATP phosphoribosyltransferase (211 aa).

This sequence belongs to the ATP phosphoribosyltransferase family. Short subfamily. As to quaternary structure, heteromultimer composed of HisG and HisZ subunits.

The protein resides in the cytoplasm. It catalyses the reaction 1-(5-phospho-beta-D-ribosyl)-ATP + diphosphate = 5-phospho-alpha-D-ribose 1-diphosphate + ATP. It participates in amino-acid biosynthesis; L-histidine biosynthesis; L-histidine from 5-phospho-alpha-D-ribose 1-diphosphate: step 1/9. Its function is as follows. Catalyzes the condensation of ATP and 5-phosphoribose 1-diphosphate to form N'-(5'-phosphoribosyl)-ATP (PR-ATP). Has a crucial role in the pathway because the rate of histidine biosynthesis seems to be controlled primarily by regulation of HisG enzymatic activity. The protein is ATP phosphoribosyltransferase of Pseudomonas putida (strain ATCC 700007 / DSM 6899 / JCM 31910 / BCRC 17059 / LMG 24140 / F1).